The following is a 68-amino-acid chain: Large ribosomal subunit protein bL31 (68 aa).

Zn(2+)-binding residues include Cys17, Cys19, Cys37, and Cys40.

The protein belongs to the bacterial ribosomal protein bL31 family. Type A subfamily. In terms of assembly, part of the 50S ribosomal subunit. Zn(2+) is required as a cofactor.

Its function is as follows. Binds the 23S rRNA. In Dehalococcoides mccartyi (strain ATCC BAA-2266 / KCTC 15142 / 195) (Dehalococcoides ethenogenes (strain 195)), this protein is Large ribosomal subunit protein bL31.